We begin with the raw amino-acid sequence, 341 residues long: Inositol 2-dehydrogenase (341 aa).

It belongs to the Gfo/Idh/MocA family. As to quaternary structure, homotetramer.

It carries out the reaction myo-inositol + NAD(+) = scyllo-inosose + NADH + H(+). Its function is as follows. Involved in the oxidation of myo-inositol (MI) to 2-keto-myo-inositol (2KMI or 2-inosose). This Acidothermus cellulolyticus (strain ATCC 43068 / DSM 8971 / 11B) protein is Inositol 2-dehydrogenase.